Reading from the N-terminus, the 483-residue chain is FK506-binding protein 4 (483 aa).

Disordered regions lie at residues 41–171 and 208–371; these read TAEP…EEFV and TGNY…LKKP. The segment covering 68-93 has biased composition (acidic residues); the sequence is EEDDDEYLDIDGEDSEDDEESDDEEV. Composition is skewed to basic and acidic residues over residues 108-121 and 130-150; these read REAA…ATKE and ADAK…KASE. 3 stretches are compositionally biased toward acidic residues: residues 151 to 167, 216 to 233, and 241 to 256; these read SDDE…EPNF, GQDE…DEEY, and LESD…DEID. 3 stretches are compositionally biased toward basic and acidic residues: residues 298–309, 323–344, and 351–370; these read LVAKDKKQAEKQ, ENKD…KDLE, and AKDK…DLKK. One can recognise a PPIase FKBP-type domain in the interval 397–483; sequence GDRVSLRYIG…VFDIKLLEIK (87 aa).

Belongs to the FKBP-type PPIase family. FKBP3/4 subfamily. In terms of assembly, binds to histones H3 and H4.

The protein resides in the nucleus. The catalysed reaction is [protein]-peptidylproline (omega=180) = [protein]-peptidylproline (omega=0). Functionally, PPIase that acts as a histone chaperone. Histone proline isomerase that increases the rate of cis-trans isomerization at prolines on the histone H3 N-terminal tail. Proline isomerization influences H3 methylation thereby regulating gene expression. The protein is FK506-binding protein 4 (FPR4) of Chaetomium thermophilum (strain DSM 1495 / CBS 144.50 / IMI 039719) (Thermochaetoides thermophila).